A 174-amino-acid chain; its full sequence is FMN reductase (NADH) RutF (174 aa).

The protein belongs to the non-flavoprotein flavin reductase family. RutF subfamily.

The enzyme catalyses FMNH2 + NAD(+) = FMN + NADH + 2 H(+). Catalyzes the reduction of FMN to FMNH2 which is used to reduce pyrimidine by RutA via the Rut pathway. This chain is FMN reductase (NADH) RutF, found in Stutzerimonas stutzeri (strain A1501) (Pseudomonas stutzeri).